The primary structure comprises 120 residues: NAD(P)H-quinone oxidoreductase subunit 3 (120 aa).

The next 3 membrane-spanning stretches (helical) occupy residues 1 to 21 (MFVL…SLVP), 64 to 84 (MFAL…PWAV), and 89 to 109 (LGLL…VALV).

It belongs to the complex I subunit 3 family. In terms of assembly, NDH-1 can be composed of about 15 different subunits; different subcomplexes with different compositions have been identified which probably have different functions.

The protein localises to the cellular thylakoid membrane. The catalysed reaction is a plastoquinone + NADH + (n+1) H(+)(in) = a plastoquinol + NAD(+) + n H(+)(out). It carries out the reaction a plastoquinone + NADPH + (n+1) H(+)(in) = a plastoquinol + NADP(+) + n H(+)(out). In terms of biological role, NDH-1 shuttles electrons from an unknown electron donor, via FMN and iron-sulfur (Fe-S) centers, to quinones in the respiratory and/or the photosynthetic chain. The immediate electron acceptor for the enzyme in this species is believed to be plastoquinone. Couples the redox reaction to proton translocation, and thus conserves the redox energy in a proton gradient. Cyanobacterial NDH-1 also plays a role in inorganic carbon-concentration. The chain is NAD(P)H-quinone oxidoreductase subunit 3 from Trichormus variabilis (strain ATCC 29413 / PCC 7937) (Anabaena variabilis).